The sequence spans 229 residues: C-&gt;U-editing enzyme APOBEC-1 (229 aa).

Positions 10 to 134 (VDPTLRRRIE…QRNRQGLRDL (125 aa)) constitute a CMP/dCMP-type deaminase domain. Zn(2+) is bound at residue H61. E63 functions as the Proton donor in the catalytic mechanism. Zn(2+) contacts are provided by C93 and C96.

It belongs to the cytidine and deoxycytidylate deaminase family. As to quaternary structure, homodimer. Interacts with A1CF; form an mRNA editing complex. Interacts with RBM47; form an mRNA editing complex. Found in a complex with CELF2/CUGBP2 and A1CF. Interacts with HNRPAB. Interacts with SYNCRIP. It depends on Zn(2+) as a cofactor.

It localises to the cytoplasm. The protein resides in the nucleus. The enzyme catalyses a cytidine in mRNA + H2O + H(+) = a uridine in mRNA + NH4(+). It catalyses the reaction cytidine(6666) in apoB mRNA + H2O + H(+) = uridine(6666) in apoB mRNA + NH4(+). In terms of biological role, cytidine deaminase catalyzing the cytidine to uridine postranscriptional editing of a variety of mRNAs. Form complexes with cofactors that confer differential editing activity and selectivity. Responsible for the postranscriptional editing of a CAA codon for Gln to a UAA codon for stop in the apolipoprotein B mRNA. Also involved in CGA (Arg) to UGA (Stop) editing in the NF1 mRNA. May also play a role in the epigenetic regulation of gene expression by participating in DNA demethylation. In Mesocricetus auratus (Golden hamster), this protein is C-&gt;U-editing enzyme APOBEC-1.